Here is a 224-residue protein sequence, read N- to C-terminus: MASMGGLHGASPAVLEGSLKINGSSRLNGSGRVAVAQRSRLVVRAQQSEETSRRSVIGLVAAGLAGGSFVQAVLADAISIKVGPPPAPSGGLPAGTDNSDQARDFALALKDRFYLQPLPPTEAAARAKESAKDIINVKPLIDRKAWPYVQNDLRSKASYLRYDLNTIISSKPKDEKKSLKDLTTKLFDTIDNLDYAAKKKSPSQAEKYYAETVSALNEVLAKLG.

The transit peptide at 1–44 directs the protein to the chloroplast; the sequence is MASMGGLHGASPAVLEGSLKINGSSRLNGSGRVAVAQRSRLVVR. The transit peptide at 45–75 directs the protein to the thylakoid; it reads AQQSEETSRRSVIGLVAAGLAGGSFVQAVLA. A Phosphothreonine modification is found at Thr-189. A Phosphotyrosine modification is found at Tyr-209. At Thr-212 the chain carries Phosphothreonine.

The protein belongs to the PsbQ family. In terms of tissue distribution, expressed in green tissue, with high steady-state mRNA levels in leaves. Not expressed in roots.

The protein localises to the plastid. It is found in the chloroplast thylakoid membrane. Functionally, required for photosystem II assembly/stability and photoautotrophic growth under low light conditions. This chain is Oxygen-evolving enhancer protein 3-1, chloroplastic (PSBQ1), found in Arabidopsis thaliana (Mouse-ear cress).